Reading from the N-terminus, the 1026-residue chain is mRNA transport homolog 4 (1026 aa).

A Helicase ATP-binding domain is found at 134–290; the sequence is ILCIDNNQSV…WVASIKQQPV (157 aa). ATP is bound at residue 147-154; that stretch reads AHTSAGKT. A DEIH box motif is present at residues 238–241; it reads DEIH. The Helicase C-terminal domain maps to 360–564; the sequence is NVLKIIRSVA…NMVLNLMRVE (205 aa).

The protein belongs to the helicase family. SKI2 subfamily.

The protein resides in the nucleus. The sequence is that of mRNA transport homolog 4 (mtr-4) from Caenorhabditis elegans.